A 296-amino-acid polypeptide reads, in one-letter code: 2-methylisocitrate lyase (296 aa).

45–47 (SGG) contacts substrate. Mg(2+)-binding residues include Asp-85 and Asp-87. Residues 123 to 124 (CG), Arg-158, Glu-188, 210 to 212 (NIT), Arg-241, and Arg-270 each bind substrate.

The protein belongs to the isocitrate lyase/PEP mutase superfamily. Methylisocitrate lyase family. In terms of assembly, homotetramer; dimer of dimers. Requires Mg(2+) as cofactor.

The enzyme catalyses (2S,3R)-3-hydroxybutane-1,2,3-tricarboxylate = pyruvate + succinate. The protein operates within organic acid metabolism; propanoate degradation. Involved in the catabolism of short chain fatty acids (SCFA) via the 2-methylcitrate cycle I (propionate degradation route). Catalyzes the thermodynamically favored C-C bond cleavage of (2R,3S)-2-methylisocitrate to yield pyruvate and succinate via an alpha-carboxy-carbanion intermediate. This chain is 2-methylisocitrate lyase, found in Escherichia coli (strain K12).